Reading from the N-terminus, the 120-residue chain is Large ribosomal subunit protein bL20 (120 aa).

This sequence belongs to the bacterial ribosomal protein bL20 family.

Functionally, binds directly to 23S ribosomal RNA and is necessary for the in vitro assembly process of the 50S ribosomal subunit. It is not involved in the protein synthesizing functions of that subunit. The polypeptide is Large ribosomal subunit protein bL20 (Ureaplasma parvum serovar 3 (strain ATCC 27815 / 27 / NCTC 11736)).